The sequence spans 399 residues: Acetylornithine aminotransferase (399 aa).

Pyridoxal 5'-phosphate is bound by residues 102–103 (GA) and phenylalanine 138. Arginine 141 lines the N(2)-acetyl-L-ornithine pocket. Residue 223–226 (DEVQ) participates in pyridoxal 5'-phosphate binding. Lysine 252 is modified (N6-(pyridoxal phosphate)lysine). Threonine 280 contacts pyridoxal 5'-phosphate.

This sequence belongs to the class-III pyridoxal-phosphate-dependent aminotransferase family. ArgD subfamily. In terms of assembly, homodimer. The cofactor is pyridoxal 5'-phosphate.

It localises to the cytoplasm. It catalyses the reaction N(2)-acetyl-L-ornithine + 2-oxoglutarate = N-acetyl-L-glutamate 5-semialdehyde + L-glutamate. It participates in amino-acid biosynthesis; L-arginine biosynthesis; N(2)-acetyl-L-ornithine from L-glutamate: step 4/4. In Ralstonia nicotianae (strain ATCC BAA-1114 / GMI1000) (Ralstonia solanacearum), this protein is Acetylornithine aminotransferase.